The chain runs to 131 residues: Transcription antitermination protein NusB (131 aa).

The protein belongs to the NusB family.

Its function is as follows. Involved in transcription antitermination. Required for transcription of ribosomal RNA (rRNA) genes. Binds specifically to the boxA antiterminator sequence of the ribosomal RNA (rrn) operons. The protein is Transcription antitermination protein NusB of Caldicellulosiruptor saccharolyticus (strain ATCC 43494 / DSM 8903 / Tp8T 6331).